A 463-amino-acid polypeptide reads, in one-letter code: A-type ATP synthase subunit B (463 aa).

It belongs to the ATPase alpha/beta chains family. Has multiple subunits with at least A(3), B(3), C, D, E, F, H, I and proteolipid K(x).

It is found in the cell membrane. In terms of biological role, component of the A-type ATP synthase that produces ATP from ADP in the presence of a proton gradient across the membrane. The B chain is a regulatory subunit. The chain is A-type ATP synthase subunit B from Thermococcus gammatolerans (strain DSM 15229 / JCM 11827 / EJ3).